The following is a 446-amino-acid chain: Maturase K (446 aa).

This sequence belongs to the intron maturase 2 family. MatK subfamily.

It localises to the plastid. Its subcellular location is the chloroplast. In terms of biological role, usually encoded in the trnK tRNA gene intron. Probably assists in splicing its own and other chloroplast group II introns. This chain is Maturase K, found in Phalaenopsis aphrodite subsp. formosana (Moth orchid).